A 496-amino-acid polypeptide reads, in one-letter code: MIKIINLKKFLFPWISTDISKIKLNSIKLNSKKIIKNDIFIALYGNCNHGKNFIFEAIKNGSSIILIETKNILKHGIIYFIKNIPIIYFYNLNYSLSELSGKFYLHPSRYMNVIGITGTNGKTTISHFIAKWLFLLGEKIGIIGTLGYGCLNKMKKSKNTTNSAIKCQKLLNFFLKKNINTVVMEVSSHGLHQNRVNNINFFSAIFSNLSQDHIDYHKNMMQYEQSKWKLFSKLNVYKYIINYDDVIGKNWIKKIPNSIIVSTKKNSIKKFKNLKMYVKDIFFHYFGTKLSISSSWGSCVINTKIFGEFNINNLLLSFVALLTLGYNFKSLANVAENLTMPNGRMKIFYVKKIPRVIVDYAHTPDALEKVLSAIKLHFKKNIWSIFGCGGDRDKSKRRVMGKICDLYSINIILTNDNPRSESETKIFNDIKIGIKNLNKVNIIPSREHAIKFAIDNSNEKDIVLILGKGHEEHQVFKYKKVFFSDQILVNKILYKT.

Leucine 29 and serine 31 together coordinate UDP-N-acetyl-alpha-D-muramoyl-L-alanyl-D-glutamate. 118–124 contributes to the ATP binding site; that stretch reads GTNGKTT. Residues asparagine 159, 160–161, serine 187, glutamine 193, and arginine 195 contribute to the UDP-N-acetyl-alpha-D-muramoyl-L-alanyl-D-glutamate site; that span reads TT. Residue lysine 227 is modified to N6-carboxylysine. Meso-2,6-diaminopimelate-binding positions include arginine 392, 416-419, glycine 467, and glutamate 471; that span reads DNPR. A Meso-diaminopimelate recognition motif motif is present at residues 416–419; sequence DNPR.

Belongs to the MurCDEF family. MurE subfamily. It depends on Mg(2+) as a cofactor. Post-translationally, carboxylation is probably crucial for Mg(2+) binding and, consequently, for the gamma-phosphate positioning of ATP.

Its subcellular location is the cytoplasm. It carries out the reaction UDP-N-acetyl-alpha-D-muramoyl-L-alanyl-D-glutamate + meso-2,6-diaminopimelate + ATP = UDP-N-acetyl-alpha-D-muramoyl-L-alanyl-gamma-D-glutamyl-meso-2,6-diaminopimelate + ADP + phosphate + H(+). Its pathway is cell wall biogenesis; peptidoglycan biosynthesis. Its function is as follows. Catalyzes the addition of meso-diaminopimelic acid to the nucleotide precursor UDP-N-acetylmuramoyl-L-alanyl-D-glutamate (UMAG) in the biosynthesis of bacterial cell-wall peptidoglycan. In Wigglesworthia glossinidia brevipalpis, this protein is UDP-N-acetylmuramoyl-L-alanyl-D-glutamate--2,6-diaminopimelate ligase.